A 215-amino-acid chain; its full sequence is Ribose-5-phosphate isomerase A (215 aa).

Residues 26-29 (TGST), 79-82 (DGAD), and 92-95 (KGGG) contribute to the substrate site. Glutamate 101 serves as the catalytic Proton acceptor. Residue lysine 119 coordinates substrate.

It belongs to the ribose 5-phosphate isomerase family. As to quaternary structure, homodimer.

The catalysed reaction is aldehydo-D-ribose 5-phosphate = D-ribulose 5-phosphate. Its pathway is carbohydrate degradation; pentose phosphate pathway; D-ribose 5-phosphate from D-ribulose 5-phosphate (non-oxidative stage): step 1/1. In terms of biological role, catalyzes the reversible conversion of ribose-5-phosphate to ribulose 5-phosphate. This Xanthomonas axonopodis pv. citri (strain 306) protein is Ribose-5-phosphate isomerase A.